A 167-amino-acid chain; its full sequence is MAKEQQVQANDLQEKLIAVNRVSKTVKGGRIMSFTALTVVGDGNGRVGFGYGKAREVPAAIQKAMEKARRNMTTIALNEGTLHHPVKGRHSGSKVYMQPAAEGTGVIAGGAMRAVLEVAGVHNVLSKAYGSTNPINIVRATIDALGSMKSPEMVAAKRGLTVEAISE.

In terms of domain architecture, S5 DRBM spans L12–I75.

It belongs to the universal ribosomal protein uS5 family. Part of the 30S ribosomal subunit. Contacts proteins S4 and S8.

With S4 and S12 plays an important role in translational accuracy. Its function is as follows. Located at the back of the 30S subunit body where it stabilizes the conformation of the head with respect to the body. The polypeptide is Small ribosomal subunit protein uS5 (Vibrio parahaemolyticus serotype O3:K6 (strain RIMD 2210633)).